A 1245-amino-acid chain; its full sequence is Structural polyprotein (1245 aa).

Residues 1–106 (MNRGFFNMLG…KPKPGKRQRM (106 aa)) form a disordered region. The segment at 37-70 (GLASQIQQLTTAVSALVIGQATRPQPPRPRPPPR) is host transcription inhibition. The segment covering 38–49 (LASQIQQLTTAV) has biased composition (polar residues). Residues 63–100 (PRPRPPPRQKKQAPKQPPKPKKPKTQEKKKKQPAKPKP) carry the Nuclear localization signal motif. Residues 67–106 (PPPRQKKQAPKQPPKPKKPKTQEKKKKQPAKPKPGKRQRM) show a composition bias toward basic residues. Residues 86 to 115 (KTQEKKKKQPAKPKPGKRQRMALKLEADRL) are binding to the viral RNA. Residues 100 to 114 (PGKRQRMALKLEADR) form a ribosome-binding region. Residues 114 to 264 (RLFDVKNEDG…KTTPEGTEEW (151 aa)) form the Peptidase S3 domain. Histidine 141 (charge relay system) is an active-site residue. The Nuclear export signal signature appears at 146 to 156 (IDHPVLSKLKF). The interval 157–162 (TKSSAY) is interaction with spike glycoprotein E2. The active-site Charge relay system is aspartate 163. Residues 185–195 (PEGFYNWHHGA) form a dimerization of the capsid protein region. Catalysis depends on serine 215, which acts as the Charge relay system. Residues 221-225 (DNSGR) form a dimerization of the capsid protein region. The interval 249–253 (SKGKT) is interaction with spike glycoprotein E2. The interval 265-279 (SAAPLVTAMCLLGNV) is functions as an uncleaved signal peptide for the precursor of protein E3/E2. Asparagine 278 carries an N-linked (GlcNAc...) asparagine; by host glycan. 4 disulfides stabilise this stretch: cysteine 283/cysteine 289, cysteine 480/cysteine 594, cysteine 529/cysteine 554, and cysteine 531/cysteine 548. Topologically, residues 329–690 (SVIDDFTLTS…HEIVQHYYHR (362 aa)) are extracellular. The N-linked (GlcNAc...) asparagine; by host glycan is linked to asparagine 524. Asparagine 646 carries N-linked (GlcNAc...) asparagine; by host glycosylation. Residues 682 to 730 (EIVQHYYHRHPVYTILAVASATVAMMIGVTVAVLCACKARRECLTPYAL) are a coiled coil. Residues 691-718 (HPVYTILAVASATVAMMIGVTVAVLCAC) traverse the membrane as a helical segment. The interaction with the capsid protein stretch occupies residues 719-723 (KARRE). Residues 719–751 (KARRECLTPYALAPNAVIPTSLALLCCVRSANA) lie on the Cytoplasmic side of the membrane. 3 S-palmitoyl cysteine; by host lipidation sites follow: cysteine 724, cysteine 744, and cysteine 745. Cysteine 724 and cysteine 745 are oxidised to a cystine. The Extracellular segment spans residues 752–763 (ETFTETMSYLWS). A helical membrane pass occupies residues 764–784 (NSQPFFWVQLCIPLAAFIVLM). Residue arginine 785 is a topological domain, cytoplasmic. A helical transmembrane segment spans residues 786-806 (CCSCCLPFLVVAGAYLAKVDA). Residues 807–1214 (YEHATTVPNV…QAAISKTSWS (408 aa)) are Extracellular-facing. Intrachain disulfides connect cysteine 855–cysteine 920, cysteine 868–cysteine 900, cysteine 869–cysteine 902, and cysteine 874–cysteine 884. Residues 890–907 (VYPFMWGGAQCFCDSENS) form an E1 fusion peptide loop region. 2 N-linked (GlcNAc...) asparagine; by host glycosylation sites follow: asparagine 945 and asparagine 1051. 4 disulfide bridges follow: cysteine 1065-cysteine 1077, cysteine 1107-cysteine 1182, cysteine 1112-cysteine 1186, and cysteine 1134-cysteine 1176. The stretch at 1196–1245 (TPHKNDQEFQAAISKTSWSWLFALFGGASSLLIIGLMIFACSMMLTSTRR) forms a coiled coil. The chain crosses the membrane as a helical span at residues 1215 to 1239 (WLFALFGGASSLLIIGLMIFACSMM). The Cytoplasmic portion of the chain corresponds to 1240 to 1245 (LTSTRR).

The protein belongs to the alphavirus structural polyprotein family. As to quaternary structure, homomultimer. Interacts with host karyopherin KPNA4; this interaction allows the nuclear import of the viral capsid protein. Interacts with spike glycoprotein E2. Interacts with host IRAK1; the interaction leads to inhibition of IRAK1-dependent signaling. In terms of assembly, the precursor of protein E3/E2 and E1 form a heterodimer shortly after synthesis. The precursor of protein E3/E2 and E1 form a heterodimer shortly after synthesis. Processing of the precursor of protein E3/E2 into E2 and E3 results in a heterodimer of the spike glycoproteins E2 and E1. Spike at virion surface are constituted of a trimer of E2-E1 heterodimers. After target cell attachment and endocytosis, E1 change conformation to form homotrimers. E2-E1 heterodimers interact with host VLDLR or LRP8/APOER2 to mediate viral entry. Interacts with 6K protein. As to quaternary structure, interacts with spike glycoprotein E1. Processing of the precursor of protein E3/E2 into E2 and E3 results in a heterodimer of the spike glycoproteins E2 and E1. Spike at virion surface are constituted of a trimer of E2-E1 heterodimers. E2-E1 heterodimers interact with host VLDLR or LRP8/APOER2 to mediate viral entry. Interacts with 6K protein. Interacts with the capsid protein. In terms of assembly, oligomer. Interacts with spike glycoprotein E1. Interacts with spike glycoprotein E2. Post-translationally, specific enzymatic cleavages in vivo yield mature proteins. Capsid protein is auto-cleaved during polyprotein translation, unmasking a signal peptide at the N-terminus of the precursor of E3/E2. The remaining polyprotein is then targeted to the host endoplasmic reticulum, where host signal peptidase cleaves it into pE2, 6K and E1 proteins. pE2 is further processed to mature E3 and E2 by host furin in trans-Golgi vesicle. In terms of processing, palmitoylated via thioester bonds. These palmitoylations may induce disruption of the C-terminus transmembrane. This would result in the reorientation of E2 C-terminus from lumenal to cytoplasmic side. N-glycosylated. Post-translationally, palmitoylated via thioester bonds.

It is found in the virion. The protein resides in the host cytoplasm. It localises to the host cell membrane. The protein localises to the host nucleus. Its subcellular location is the virion membrane. It is found in the host Golgi apparatus. The protein resides in the host trans-Golgi network. It localises to the host endoplasmic reticulum. The enzyme catalyses Autocatalytic release of the core protein from the N-terminus of the togavirus structural polyprotein by hydrolysis of a -Trp-|-Ser- bond.. The channel activity is blocked by 5-N, N-Hexamethylene amiloride. In terms of biological role, forms an icosahedral capsid with a T=4 symmetry composed of 240 copies of the capsid protein surrounded by a lipid membrane through which penetrate 80 spikes composed of trimers of E1-E2 heterodimers. The capsid protein binds to the viral RNA genome at a site adjacent to a ribosome binding site for viral genome translation following genome release. Possesses a protease activity that results in its autocatalytic cleavage from the nascent structural protein. Following its self-cleavage, the capsid protein transiently associates with ribosomes, and within several minutes the protein binds to viral RNA and rapidly assembles into icosahedric core particles. The resulting nucleocapsid eventually associates with the cytoplasmic domain of the spike glycoprotein E2 at the cell membrane, leading to budding and formation of mature virions. In case of infection, new virions attach to target cells and after clathrin-mediated endocytosis their membrane fuses with the host endosomal membrane. This leads to the release of the nucleocapsid into the cytoplasm, followed by an uncoating event necessary for the genomic RNA to become accessible. The uncoating might be triggered by the interaction of capsid proteins with ribosomes. Binding of ribosomes would release the genomic RNA since the same region is genomic RNA-binding and ribosome-binding. Specifically inhibits interleukin-1 receptor-associated kinase 1/IRAK1-dependent signaling during viral entry, representing a means by which the alphaviruses may evade innate immune detection and activation prior to viral gene expression. Provides the signal sequence for the translocation of the precursor of protein E3/E2 to the host endoplasmic reticulum. Furin-cleaved E3 remains associated with spike glycoprotein E1 and mediates pH protection of the latter during the transport via the secretory pathway. After virion release from the host cell, the assembly protein E3 is gradually released in the extracellular space. Its function is as follows. Plays a role in viral attachment to target host cell, by binding to the cell receptors VLDLR or LRP8/APOER2. Synthesized as a pE2 precursor which is processed by furin at the cell membrane just before virion budding, giving rise to E2-E1 heterodimer. The pE2-E1 heterodimer is stable, whereas E2-E1 is unstable and dissociate at low pH. pE2 is processed at the last step, presumably to avoid E1 fusion activation before its final export to cell surface. E2 C-terminus contains a transitory transmembrane that would be disrupted by palmitoylation, resulting in reorientation of the C-terminal tail from lumenal to cytoplasmic side. This step is critical since E2 C-terminus is involved in budding by interacting with capsid proteins. This release of E2 C-terminus in cytoplasm occurs lately in protein export, and precludes premature assembly of particles at the endoplasmic reticulum membrane. Functionally, acts as a viroporin that participates in virus glycoprotein processing and transport to the plasma membrane, cell permeabilization and budding of viral particles. Disrupts the calcium homeostasis of the cell, probably at the endoplasmic reticulum level resulting in the increased levels of cytoplasmic calcium. Because of its lipophilic properties, the 6K protein is postulated to influence the selection of lipids that interact with the transmembrane domains of the glycoproteins, which, in turn, affects the deformability of the bilayer required for the extreme curvature that occurs as budding proceeds. Present in low amount in virions, about 3% compared to viral glycoproteins. In terms of biological role, class II viral fusion protein. Fusion activity is inactive as long as E1 is bound to E2 in mature virion. After virus attachment to target cell via host VLDLR or LRP8/APOER2 and endocytosis, acidification of the endosome induces dissociation of E1/E2 heterodimer and concomitant trimerization of the E1 subunits. This E1 trimer is fusion active, and promotes release of viral nucleocapsid in cytoplasm after endosome and viral membrane fusion. Efficient fusion requires the presence of cholesterol and sphingolipid in the target membrane. The protein is Structural polyprotein of Acrocephalus scirpaceus (Eurasian reed-warbler).